We begin with the raw amino-acid sequence, 101 residues long: Small ribosomal subunit protein uS14 (101 aa).

It belongs to the universal ribosomal protein uS14 family. As to quaternary structure, part of the 30S ribosomal subunit. Contacts proteins S3 and S10.

Functionally, binds 16S rRNA, required for the assembly of 30S particles and may also be responsible for determining the conformation of the 16S rRNA at the A site. The chain is Small ribosomal subunit protein uS14 from Paenarthrobacter aurescens (strain TC1).